We begin with the raw amino-acid sequence, 233 residues long: Ribonuclease 3 (233 aa).

Residues 4-126 (LNKLMERLGH…IVGAIYIDAG (123 aa)) form the RNase III domain. Glu-39 lines the Mg(2+) pocket. Asp-43 is a catalytic residue. 2 residues coordinate Mg(2+): Asp-112 and Glu-115. Residue Glu-115 is part of the active site. Positions 153 to 222 (DAKSLLQEWL…AKRFLELLDD (70 aa)) constitute a DRBM domain.

The protein belongs to the ribonuclease III family. As to quaternary structure, homodimer. Mg(2+) is required as a cofactor.

The protein localises to the cytoplasm. It catalyses the reaction Endonucleolytic cleavage to 5'-phosphomonoester.. Functionally, digests double-stranded RNA. Involved in the processing of primary rRNA transcript to yield the immediate precursors to the large and small rRNAs (23S and 16S). Processes some mRNAs, and tRNAs when they are encoded in the rRNA operon. Processes pre-crRNA and tracrRNA of type II CRISPR loci if present in the organism. The sequence is that of Ribonuclease 3 from Coxiella burnetii (strain RSA 331 / Henzerling II).